The sequence spans 102 residues: Monothiol glutaredoxin-S5 (102 aa).

The region spanning 1-101 (MENLQKMISE…PMLKRAGALW (101 aa)) is the Glutaredoxin domain. Position 21 (Cys-21) interacts with [2Fe-2S] cluster. The Responsive for interaction with TGA factors signature appears at 99–102 (ALWL).

It belongs to the glutaredoxin family. CC-type subfamily.

The protein localises to the cytoplasm. Its subcellular location is the nucleus. In terms of biological role, may only reduce GSH-thiol disulfides, but not protein disulfides. The chain is Monothiol glutaredoxin-S5 (GRXS5) from Arabidopsis thaliana (Mouse-ear cress).